We begin with the raw amino-acid sequence, 271 residues long: Glutamate racemase (271 aa).

Substrate is bound by residues aspartate 12–serine 13 and tyrosine 44–glycine 45. Cysteine 75 acts as the Proton donor/acceptor in catalysis. Asparagine 76–serine 77 provides a ligand contact to substrate. Residue cysteine 185 is the Proton donor/acceptor of the active site. Threonine 186–histidine 187 is a substrate binding site.

This sequence belongs to the aspartate/glutamate racemases family.

The enzyme catalyses L-glutamate = D-glutamate. The protein operates within cell wall biogenesis; peptidoglycan biosynthesis. Functionally, provides the (R)-glutamate required for cell wall biosynthesis. This Mycobacterium bovis (strain BCG / Pasteur 1173P2) protein is Glutamate racemase.